A 522-amino-acid polypeptide reads, in one-letter code: Transcription factor SPT20 homolog (522 aa).

A Phosphoserine modification is found at S284. Disordered stretches follow at residues 361-380 (DEESDSQMSPSHSSTDDHSN) and 408-522 (PVKM…RHES). The span at 412 to 425 (SHSSSGSASLSQVS) shows a compositional bias: low complexity. Positions 433–442 (TETVSVQSSV) are enriched in polar residues. Low complexity predominate over residues 458–467 (SSSGNSSSGN). The span at 481–492 (PTPPPSSKPPTI) shows a compositional bias: pro residues. T482 bears the Phosphothreonine mark. Over residues 506 to 522 (LSPAALSPASSSQRHES) the composition is skewed to low complexity. Phosphoserine is present on residues S507 and S512.

The protein belongs to the SPT20 family. Interacts with ATG9A. Interacts with MAPK14.

Its function is as follows. Required for MAP kinase p38 (MAPK11, MAPK12, MAPK13 and/or MAPK14) activation during gastrulation. Required for down-regulation of E-cadherin during gastrulation by regulating E-cadherin protein level downstream from NCK-interacting kinase (NIK) and independently of the regulation of transcription by FGF signaling and Snail. Required for starvation-induced ATG9A trafficking during autophagy. This is Transcription factor SPT20 homolog (SUPT20H) from Pongo abelii (Sumatran orangutan).